Here is a 522-residue protein sequence, read N- to C-terminus: Putative aminopeptidase W07G4.4 (522 aa).

2 residues coordinate Zn(2+): Lys271 and Asp276. Lys283 is an active-site residue. Zn(2+) contacts are provided by Asp294, Asp354, and Glu356. The active site involves Arg358.

It belongs to the peptidase M17 family. Zn(2+) serves as cofactor.

This is Putative aminopeptidase W07G4.4 (lap-2) from Caenorhabditis elegans.